Here is a 542-residue protein sequence, read N- to C-terminus: Protein DETOXIFICATION 34 (542 aa).

The next 12 membrane-spanning stretches (helical) occupy residues Ala97 to Val117, Ala127 to Ala147, Ile176 to Ile196, Ile204 to Ile224, Ile240 to Ile260, Ala272 to Trp292, Phe316 to Thr336, Ile344 to Ile364, Val390 to Ile410, Leu435 to Gly455, Val462 to Gly482, and Gly491 to Ile511.

Belongs to the multi antimicrobial extrusion (MATE) (TC 2.A.66.1) family.

It is found in the membrane. The protein is Protein DETOXIFICATION 34 of Arabidopsis thaliana (Mouse-ear cress).